The primary structure comprises 316 residues: Beta-ketoacyl-[acyl-carrier-protein] synthase III 1 (316 aa).

Active-site residues include C112 and H243. Residues 244–248 form an ACP-binding region; the sequence is QANYR. N273 is a catalytic residue.

Belongs to the thiolase-like superfamily. FabH family. As to quaternary structure, homodimer.

The protein resides in the cytoplasm. It catalyses the reaction malonyl-[ACP] + acetyl-CoA + H(+) = 3-oxobutanoyl-[ACP] + CO2 + CoA. The protein operates within lipid metabolism; fatty acid biosynthesis. In terms of biological role, catalyzes the condensation reaction of fatty acid synthesis by the addition to an acyl acceptor of two carbons from malonyl-ACP. Catalyzes the first condensation reaction which initiates fatty acid synthesis and may therefore play a role in governing the total rate of fatty acid production. Possesses both acetoacetyl-ACP synthase and acetyl transacylase activities. Its substrate specificity determines the biosynthesis of branched-chain and/or straight-chain of fatty acids. The polypeptide is Beta-ketoacyl-[acyl-carrier-protein] synthase III 1 (Vibrio parahaemolyticus serotype O3:K6 (strain RIMD 2210633)).